The sequence spans 1146 residues: MSDYFSSRPSQTLTPMGNKPSGGGGGDDASSIHSKSSQYLMDILPDSMTLNESVSSIVANNQAKEFILPETDERSPYFINVPIPKAQPTSTTETKKPLAGDEAIDGQFVKEYPTDILVDRFYKWKKILKGLVIYLREVAYAQEQFARINYQLKGSVKFPFLTDIDETTNTITDPFTTAPRGPKKAQPAQKKVGLTDSEQFQMQMQQEQQENAVQAPTDESKMSLAPHEYKPVQTTESDNTSAASGFVKFGSGSIQDIQVILKKYHLSLANQQFKISKEITSTVIPKLEELRKDLRYKITEIKDLHGDFKTNIGAHIQLTSQLLKKYIAAVKFMNAHGIGNDRASPTNKKPHKLDPKHDPYLLKLQLDLQLKRQVAEETYLQEAFINLQSSGLQLEKIIYTKIQHALLRYSALIDSEARLMIKNMCQELQHGIISKPPAFEWDNFVTQHPSCLLNWKSNDPIPPPRKVSDVIYPHMKSPLAKCIKAGYFLKKSELLPTYHQGYFVLTSNYIHEFQSSDFYNLSSSTPNSTKSSAYSSSVSIADTYANANNAKANNHHRQASDVHNSSTTTGGTAGANGIRGIRKKSYLAPIMSIPLNDCTLKDASSTKFVLVGKPTLNENADVRKSSSSTYLSGSSQASLPKYGHETAKIFSKAPFHKFLKGSKPKNKNTKSSELDQFYAAAQKESNNYVTWTFKIVSPEPSEEELKHFKRWVQDLKNLTSFNDTKDRIKFIEDRVMKSHRFKAGHMSRNSVNIGSHTPCLTDSTFTLQDGTTTSVNLKGRAEKPQYIHIQNNSLADFDGNGFRSKVNTPAIDDYGNLITVERRPAQSPHQYSDYMATSGNTTPSYSSGSRPQSMYNGYNPAVSITSNGMMLQQSTANNNTNPTTNLRHQRNISQTSSLPGFSYTSLSLPVNSPGSSNSESSSGGYFAIPLHGNNNNNNYTQRNSEGSSPCYNDDQIRQQQQPLQMQPLSRTSSSSVNVTAMRSTSAGNSITANAPVVPKVMVNNQNVKTVAADQSATAPSSPTMNSSVTTINRESPYQTLKKTNSTGNVPCLTAEKTHAHPAFYKRGNNSAQNLTTSSSTASRVHPIRKHKKNVSFSSLNSLMFSKKGANHGGNLMTNQFMSGGIQEDDGDSTNNDTIKLNQSIYS.

Over residues 1–15 (MSDYFSSRPSQTLTP) the composition is skewed to polar residues. Disordered stretches follow at residues 1-32 (MSDY…ASSI) and 171-194 (ITDP…KVGL). Phosphoserine is present on Ser344. A PH domain is found at 482-606 (CIKAGYFLKK…DCTLKDASST (125 aa)). The segment at 553–575 (NNHHRQASDVHNSSTTTGGTAGA) is disordered. Low complexity predominate over residues 564-575 (NSSTTTGGTAGA). Ser793 bears the Phosphoserine mark. The residue at position 808 (Thr808) is a Phosphothreonine. Disordered stretches follow at residues 835–854 (MATS…PQSM) and 909–982 (PVNS…TAMR). A compositionally biased stretch (low complexity) spans 912 to 924 (SPGSSNSESSSGG). Polar residues predominate over residues 939 to 950 (YTQRNSEGSSPC). Residue Ser944 is modified to Phosphoserine. The segment covering 958–968 (QQQQPLQMQPL) has biased composition (low complexity). Ser969 carries the post-translational modification Phosphoserine. The segment covering 969–982 (SRTSSSSVNVTAMR) has biased composition (polar residues). Position 1017 is a phosphothreonine (Thr1017). Phosphoserine is present on residues Ser1070, Ser1095, and Ser1098. A disordered region spans residues 1124–1146 (GIQEDDGDSTNNDTIKLNQSIYS). The segment covering 1132–1146 (STNNDTIKLNQSIYS) has biased composition (polar residues).

It belongs to the RGC1 family. In terms of assembly, component of the RNA polymerase II holoenzyme. Interacts with RPO21 and SSN8. Phosphorylated in response to various stresses. stress-induced phosphorylation is partially dependent on HOG1.

Its subcellular location is the cytoplasm. Positive regulator of FPS1 glycerol channel required for the glycerol efflux. As a component of the RNA polymerase II holoenzyme, is required for SSN8 destruction in response to oxidative stress but not heat shock. Required for cell survival in response to heat shock independent of SSN8. The polypeptide is Activator of SKN7 protein 10 (ASK10) (Saccharomyces cerevisiae (strain ATCC 204508 / S288c) (Baker's yeast)).